The chain runs to 146 residues: Large ribosomal subunit protein uL15 (146 aa).

The tract at residues 1–54 (MKLHELQPAAGSRKAPKRVGRGTGSGLGRNAGKGEKGQNARSGGGVRPGFEGGQ) is disordered. 2 stretches are compositionally biased toward gly residues: residues 21-31 (RGTGSGLGRNA) and 42-52 (SGGGVRPGFEG).

This sequence belongs to the universal ribosomal protein uL15 family. In terms of assembly, part of the 50S ribosomal subunit.

Binds to the 23S rRNA. This Clostridium botulinum (strain Eklund 17B / Type B) protein is Large ribosomal subunit protein uL15.